Consider the following 62-residue polypeptide: Large ribosomal subunit protein bL28 (62 aa).

This sequence belongs to the bacterial ribosomal protein bL28 family.

This is Large ribosomal subunit protein bL28 from Helicobacter pylori (strain Shi470).